A 444-amino-acid polypeptide reads, in one-letter code: Methylenetetrahydrofolate--tRNA-(uracil-5-)-methyltransferase TrmFO (444 aa).

Gly-10–Gly-15 serves as a coordination point for FAD.

It belongs to the MnmG family. TrmFO subfamily. It depends on FAD as a cofactor.

Its subcellular location is the cytoplasm. The catalysed reaction is uridine(54) in tRNA + (6R)-5,10-methylene-5,6,7,8-tetrahydrofolate + NADH + H(+) = 5-methyluridine(54) in tRNA + (6S)-5,6,7,8-tetrahydrofolate + NAD(+). It catalyses the reaction uridine(54) in tRNA + (6R)-5,10-methylene-5,6,7,8-tetrahydrofolate + NADPH + H(+) = 5-methyluridine(54) in tRNA + (6S)-5,6,7,8-tetrahydrofolate + NADP(+). Functionally, catalyzes the folate-dependent formation of 5-methyl-uridine at position 54 (M-5-U54) in all tRNAs. The polypeptide is Methylenetetrahydrofolate--tRNA-(uracil-5-)-methyltransferase TrmFO (Streptococcus gordonii (strain Challis / ATCC 35105 / BCRC 15272 / CH1 / DL1 / V288)).